Reading from the N-terminus, the 307-residue chain is Porphobilinogen deaminase (307 aa).

Residue C239 is modified to S-(dipyrrolylmethanemethyl)cysteine.

The protein belongs to the HMBS family. As to quaternary structure, monomer. The cofactor is dipyrromethane.

The enzyme catalyses 4 porphobilinogen + H2O = hydroxymethylbilane + 4 NH4(+). Its pathway is porphyrin-containing compound metabolism; protoporphyrin-IX biosynthesis; coproporphyrinogen-III from 5-aminolevulinate: step 2/4. In terms of biological role, tetrapolymerization of the monopyrrole PBG into the hydroxymethylbilane pre-uroporphyrinogen in several discrete steps. The protein is Porphobilinogen deaminase of Campylobacter jejuni subsp. jejuni serotype O:23/36 (strain 81-176).